We begin with the raw amino-acid sequence, 427 residues long: Mitochondrial distribution and morphology protein 10 (427 aa).

The segment covering 393 to 414 (SSYANSQATAGAQGSSGGPPTS) has biased composition (low complexity). Residues 393-427 (SSYANSQATAGAQGSSGGPPTSYWRGVGVSVSYSS) are disordered.

Belongs to the MDM10 family. As to quaternary structure, component of the ER-mitochondria encounter structure (ERMES) or MDM complex, composed of mmm1, mdm10, mdm12 and mdm34. Associates with the mitochondrial outer membrane sorting assembly machinery SAM(core) complex.

It localises to the mitochondrion outer membrane. Component of the ERMES/MDM complex, which serves as a molecular tether to connect the endoplasmic reticulum and mitochondria. Components of this complex are involved in the control of mitochondrial shape and protein biogenesis and may function in phospholipid exchange. mdm10 is involved in the late assembly steps of the general translocase of the mitochondrial outer membrane (TOM complex). Functions in the tom40-specific route of the assembly of outer membrane beta-barrel proteins, including the association of tom40 with the receptor tom22 and small TOM proteins. Can associate with the SAM(core) complex as well as the mdm12-mmm1 complex, both involved in late steps of the major beta-barrel assembly pathway, that is responsible for biogenesis of all outer membrane beta-barrel proteins. May act as a switch that shuttles between both complexes and channels precursor proteins into the tom40-specific pathway. Plays a role in mitochondrial morphology and in the inheritance of mitochondria. This chain is Mitochondrial distribution and morphology protein 10 (mdmB), found in Emericella nidulans (strain FGSC A4 / ATCC 38163 / CBS 112.46 / NRRL 194 / M139) (Aspergillus nidulans).